The primary structure comprises 486 residues: Catalase (486 aa).

The disordered stretch occupies residues methionine 1–proline 28. Active-site residues include histidine 54 and asparagine 127. Residue tyrosine 337 participates in heme binding.

The protein belongs to the catalase family. In terms of assembly, homodimer. It depends on heme as a cofactor.

It carries out the reaction 2 H2O2 = O2 + 2 H2O. In terms of biological role, decomposes hydrogen peroxide into water and oxygen; serves to protect cells from the toxic effects of hydrogen peroxide. May be involved in aerotolerance of B.fragilis. In Bacteroides fragilis (strain YCH46), this protein is Catalase (katA).